Here is a 157-residue protein sequence, read N- to C-terminus: Cyclic pyranopterin monophosphate synthase (157 aa).

Residues 74–76 (MCH) and 112–113 (ME) contribute to the substrate site. The active site involves Asp-127.

It belongs to the MoaC family. Homohexamer; trimer of dimers.

It carries out the reaction (8S)-3',8-cyclo-7,8-dihydroguanosine 5'-triphosphate = cyclic pyranopterin phosphate + diphosphate. It participates in cofactor biosynthesis; molybdopterin biosynthesis. Functionally, catalyzes the conversion of (8S)-3',8-cyclo-7,8-dihydroguanosine 5'-triphosphate to cyclic pyranopterin monophosphate (cPMP). This Campylobacter jejuni subsp. jejuni serotype O:2 (strain ATCC 700819 / NCTC 11168) protein is Cyclic pyranopterin monophosphate synthase.